The sequence spans 227 residues: PKHD-type hydroxylase Mfla_2317 (227 aa).

In terms of domain architecture, Fe2OG dioxygenase spans 78–178; sequence KVFPPLFNRY…RVSSFFWMQS (101 aa). Fe cation contacts are provided by H96, D98, and H159. Residue R169 participates in 2-oxoglutarate binding.

The cofactor is Fe(2+). Requires L-ascorbate as cofactor.

The chain is PKHD-type hydroxylase Mfla_2317 from Methylobacillus flagellatus (strain ATCC 51484 / DSM 6875 / VKM B-1610 / KT).